A 107-amino-acid polypeptide reads, in one-letter code: DNA polymerase delta subunit 4 (107 aa).

Positions 1 to 16 (MGRKRLITDSYPVVKR) match the PCNA-interaction protein motif (PIP box) motif. Positions 1–44 (MGRKRLITDSYPVVKRREGPAGHSKGELAPELGEEPQPRDEEEA) are disordered. The segment covering 15–28 (KRREGPAGHSKGEL) has biased composition (basic and acidic residues).

It belongs to the DNA polymerase delta subunit 4 family. As to quaternary structure, component of the tetrameric DNA polymerase delta complex (Pol-delta4), which consists of POLD1/p125, POLD2/p50, POLD3/p66/p68 and POLD4/p12, with POLD1 bearing DNA polymerase and 3' to 5' proofreading exonuclease activities. Within this complex, directly interacts with POLD1 and POLD2. Directly interacts with PCNA, as do POLD1 and POLD3; this interaction stimulates Pol-delta4 polymerase activity. As POLD1 and POLD2, directly interacts with WRNIP1; this interaction stimulates DNA polymerase delta-mediated DNA synthesis, independently of the presence of PCNA. This stimulation may be due predominantly to an increase of initiation frequency and also to increased processivity. Upon genotoxic stress induced by DNA damaging agents or by replication stress, POLD4 is proteolytically degraded and Pol-delta4 is converted into a trimeric form of the complex (Pol-delta3) which has an increased proofreading activity. The DNA polymerase delta complex interacts with POLDIP2; this interaction is probably mediated through direct binding to POLD2. Post-translationally, ubiquitinated; undergoes 'Lys-48'-linked ubiquitination in response to UV irradiation, leading to proteasomal degradation. This modification is partly mediated by RNF8 and by the DCX(DTL) E3 ubiquitin ligase complex (also called CRL4(CDT2)). Efficient degradation requires the presence of PCNA and is required for the inhibition of fork progression after DNA damage.

The protein resides in the nucleus. As a component of the tetrameric DNA polymerase delta complex (Pol-delta4), plays a role in high fidelity genome replication and repair. Within this complex, increases the rate of DNA synthesis and decreases fidelity by regulating POLD1 polymerase and proofreading 3' to 5' exonuclease activity. Pol-delta4 participates in Okazaki fragment processing, through both the short flap pathway, as well as a nick translation system. Under conditions of DNA replication stress, required for the repair of broken replication forks through break-induced replication (BIR), a mechanism that may induce segmental genomic duplications of up to 200 kb. Involved in Pol-delta4 translesion synthesis (TLS) of templates carrying O6-methylguanine or abasic sites. Its degradation in response to DNA damage is required for the inhibition of fork progression and cell survival. The protein is DNA polymerase delta subunit 4 (POLD4) of Homo sapiens (Human).